The primary structure comprises 223 residues: Cytidylate kinase (223 aa).

10-18 lines the ATP pocket; sequence GPASSGKST.

The protein belongs to the cytidylate kinase family. Type 1 subfamily.

It localises to the cytoplasm. The catalysed reaction is CMP + ATP = CDP + ADP. It carries out the reaction dCMP + ATP = dCDP + ADP. This chain is Cytidylate kinase, found in Streptococcus pneumoniae (strain Taiwan19F-14).